A 314-amino-acid polypeptide reads, in one-letter code: Acetyl-coenzyme A carboxylase carboxyl transferase subunit alpha (314 aa).

The 255-residue stretch at 38 to 292 (RLERKSAALL…ANAIDEELDA (255 aa)) folds into the CoA carboxyltransferase C-terminal domain.

The protein belongs to the AccA family. Acetyl-CoA carboxylase is a heterohexamer composed of biotin carboxyl carrier protein (AccB), biotin carboxylase (AccC) and two subunits each of ACCase subunit alpha (AccA) and ACCase subunit beta (AccD).

The protein localises to the cytoplasm. The catalysed reaction is N(6)-carboxybiotinyl-L-lysyl-[protein] + acetyl-CoA = N(6)-biotinyl-L-lysyl-[protein] + malonyl-CoA. Its pathway is lipid metabolism; malonyl-CoA biosynthesis; malonyl-CoA from acetyl-CoA: step 1/1. Functionally, component of the acetyl coenzyme A carboxylase (ACC) complex. First, biotin carboxylase catalyzes the carboxylation of biotin on its carrier protein (BCCP) and then the CO(2) group is transferred by the carboxyltransferase to acetyl-CoA to form malonyl-CoA. This chain is Acetyl-coenzyme A carboxylase carboxyl transferase subunit alpha, found in Erythrobacter litoralis (strain HTCC2594).